The chain runs to 254 residues: Metalloprotease YcaL (254 aa).

The signal sequence occupies residues 1-19 (MKNTKLLLAIATSAALLTG). The N-palmitoyl cysteine moiety is linked to residue cysteine 20. Cysteine 20 carries the S-diacylglycerol cysteine lipid modification. Histidine 134 contributes to the Zn(2+) binding site. The active site involves glutamate 135. Histidine 138 and glutamate 193 together coordinate Zn(2+). Residues 227-254 (GRTQSMFDSHPPSTERAQHIRDRIASGK) are disordered. A compositionally biased stretch (basic and acidic residues) spans 242-254 (RAQHIRDRIASGK).

Belongs to the peptidase M48B family. Requires Zn(2+) as cofactor.

The protein localises to the cell inner membrane. Involved in the degradation of the LPS-assembly protein LptD. Degrades LptD that have engaged the Bam complex but are stalled at an early step in the outer membrane protein assembly process. The protein is Metalloprotease YcaL (ycaL) of Escherichia coli (strain K12).